Here is a 204-residue protein sequence, read N- to C-terminus: Putative peptidase PfaP (204 aa).

An N-terminal signal peptide occupies residues 1-27; sequence MRLRKTRKIVVSMKDMAASGGYYIASS. The active-site Nucleophile is Ser-19. Catalysis depends on Lys-70, which acts as the Proton donor/acceptor.

Belongs to the peptidase S49 family.

Functionally, possible protease. May be involved in export of periplasmic flagella proteins. This is Putative peptidase PfaP (pfaP) from Leptospira borgpetersenii.